The sequence spans 397 residues: Elongation factor Tu-1 (397 aa).

A tr-type G domain is found at 10–206 (KPHVNIGTIG…AVDEAIPEPE (197 aa)). Residues 19 to 26 (GHIDHGKT) are G1. 19-26 (GHIDHGKT) serves as a coordination point for GTP. Threonine 26 serves as a coordination point for Mg(2+). Residues 62 to 66 (GITIS) form a G2 region. Residues 83 to 86 (DCPG) are G3. Residues 83 to 87 (DCPGH) and 138 to 141 (NKAD) contribute to the GTP site. Positions 138–141 (NKAD) are G4. Positions 176 to 178 (SAL) are G5.

Belongs to the TRAFAC class translation factor GTPase superfamily. Classic translation factor GTPase family. EF-Tu/EF-1A subfamily. In terms of assembly, monomer.

It localises to the cytoplasm. The enzyme catalyses GTP + H2O = GDP + phosphate + H(+). Its function is as follows. GTP hydrolase that promotes the GTP-dependent binding of aminoacyl-tRNA to the A-site of ribosomes during protein biosynthesis. The protein is Elongation factor Tu-1 of Streptomyces coelicolor (strain ATCC BAA-471 / A3(2) / M145).